The primary structure comprises 188 residues: UPF0301 protein MCA2336 2 (188 aa).

The protein belongs to the UPF0301 (AlgH) family.

The polypeptide is UPF0301 protein MCA2336 2 (Methylococcus capsulatus (strain ATCC 33009 / NCIMB 11132 / Bath)).